A 487-amino-acid polypeptide reads, in one-letter code: G-patch domain and KOW motifs-containing protein (487 aa).

Disordered regions lie at residues 65 to 121, 181 to 232, and 295 to 367; these read HKNR…PLLM, VKPL…TGSA, and KVHQ…RPEP. Residues 88-116 adopt a coiled-coil conformation; it reads AVLSQAVKELIEESRRAQEDNSETNQTLS. Basic and acidic residues-rich tracts occupy residues 96–106 and 200–209; these read ELIEESRRAQE and SALKHLEPQK. The 47-residue stretch at 154 to 200 folds into the G-patch domain; that stretch reads VQQYGMAMLRGMGWKEGEGIGRTFKQDVKPLEQKLRPKGLGLGADRS. The region spanning 226 to 253 is the KOW 1 domain; it reads GLGTGSAVQIQSGAYKDMYGKVEGIDPD. 2 stretches are compositionally biased toward basic and acidic residues: residues 295–333 and 352–367; these read KVHQ…DVKL and RSPE…RPEP. The 28-residue stretch at 428 to 455 folds into the KOW 2 domain; sequence PKEEGEHVMVVLGKYRGMVGKILHRDKQ.

This sequence belongs to the MOS2 family. As to quaternary structure, component of the minor spliceosome, which splices U12-type introns.

The protein resides in the nucleus. In terms of biological role, RNA-binding protein involved in pre-mRNA splicing. This Xenopus laevis (African clawed frog) protein is G-patch domain and KOW motifs-containing protein (gpkow).